The primary structure comprises 502 residues: uncharacterized protein (502 aa).

This is an uncharacterized protein from Agrobacterium vitis (Rhizobium vitis).